The following is a 431-amino-acid chain: Shaggy-related protein kinase beta (431 aa).

Positions 12–24 (SGRNFVSSDNVGE) are enriched in polar residues. Residues 12–65 (SGRNFVSSDNVGETETPRSKPNQNREETESTETTSYEKDSVSSSENSDHLPKEI) are disordered. Composition is skewed to basic and acidic residues over residues 26 to 39 (ETPR…REET) and 46 to 65 (SYEK…PKEI). A Protein kinase domain is found at 102–386 (YRAEHVIGTG…ALEACAHPFF (285 aa)). ATP is bound by residues 108–116 (IGTGSFGVV) and lysine 131. Aspartate 227 serves as the catalytic Proton acceptor. Tyrosine 262 is subject to Phosphotyrosine.

The protein belongs to the protein kinase superfamily. CMGC Ser/Thr protein kinase family. GSK-3 subfamily. Autophosphorylated mainly on threonine and serine residues.

The catalysed reaction is L-seryl-[protein] + ATP = O-phospho-L-seryl-[protein] + ADP + H(+). It catalyses the reaction L-threonyl-[protein] + ATP = O-phospho-L-threonyl-[protein] + ADP + H(+). Functionally, may mediate extracellular signals to regulate transcription in differentiating cells. This chain is Shaggy-related protein kinase beta, found in Arabidopsis thaliana (Mouse-ear cress).